Here is a 132-residue protein sequence, read N- to C-terminus: Glycine cleavage system H protein (132 aa).

One can recognise a Lipoyl-binding domain in the interval 24–106 (RVRVGITDYA…YGAGWLFELE (83 aa)). An N6-lipoyllysine modification is found at Lys65.

It belongs to the GcvH family. As to quaternary structure, the glycine cleavage system is composed of four proteins: P, T, L and H. (R)-lipoate is required as a cofactor.

The glycine cleavage system catalyzes the degradation of glycine. The H protein shuttles the methylamine group of glycine from the P protein to the T protein. This chain is Glycine cleavage system H protein, found in Nocardia farcinica (strain IFM 10152).